The primary structure comprises 451 residues: Magnesium transporter MgtE (451 aa).

The Cytoplasmic portion of the chain corresponds to 1 to 285 (MVQNMTYDEL…TKAYVAAYRR (285 aa)). Residues aspartate 64 and aspartate 96 each contribute to the Mg(2+) site. 2 CBS domains span residues 140–203 (MTNR…VQDL) and 204–260 (MFTR…EADE). Mg(2+) contacts are provided by glutamate 218, aspartate 228, aspartate 249, aspartate 252, glutamate 257, glutamate 260, and aspartate 261. A helical transmembrane segment spans residues 286–306 (LPWLILLLFIGLISGSIISYF). The Extracellular segment spans residues 307–311 (EDALK). A helical membrane pass occupies residues 312–332 (QVVALAFFMPMVSGMTGNTGT). Residues 333–371 (QSLAVVIRGLSKEEMNKKTIVRLIFREFRTSIFIGAVCS) are Cytoplasmic-facing. 2 helical membrane-spanning segments follow: residues 372 to 392 (VLIA…FVVA) and 393 to 413 (SSLF…PIIL). Over 414–427 (HKLKVDPAIASGPL) the chain is Cytoplasmic. 2 residues coordinate Mg(2+): aspartate 419 and aspartate 433. A helical transmembrane segment spans residues 428–448 (ITTLNDILSLLIYFGIATAFI). Residues 449-451 (HSL) are Extracellular-facing.

This sequence belongs to the SLC41A transporter family. As to quaternary structure, homodimer.

Its subcellular location is the cell membrane. It carries out the reaction Mg(2+)(in) = Mg(2+)(out). With respect to regulation, binds cyclic di-AMP (c-di-AMP), which may regulate the transporter activity. Functionally, acts as a magnesium transporter. MgtE is the dominant transporter under rich-medium growth conditions, and it may provide the primary route of magnesium import in B.subtilis, while the other putative transport proteins are likely to be utilized for more-specialized growth conditions. The polypeptide is Magnesium transporter MgtE (Bacillus subtilis (strain 168)).